We begin with the raw amino-acid sequence, 566 residues long: KsdD-like steroid dehydrogenase MT0809 (566 aa).

23 to 54 (DAIVVGAGLAGLVAACELADRGLRVLILDQEN) serves as a coordination point for FAD.

Belongs to the FAD-dependent oxidoreductase 2 family. The cofactor is FAD.

It functions in the pathway lipid metabolism; steroid biosynthesis. Able to catalyze the elimination of the C-1 and C-2 hydrogen atoms of the A-ring from the polycyclic ring structure of 3-ketosteroids. The chain is KsdD-like steroid dehydrogenase MT0809 from Mycobacterium tuberculosis (strain CDC 1551 / Oshkosh).